Consider the following 413-residue polypeptide: Phosphatidylcholine-sterol acyltransferase (413 aa).

The first 22 residues, 1 to 22, serve as a signal peptide directing secretion; sequence GRTGAGFTLLTLLLLLPQPTSQ. An intrachain disulfide couples cysteine 72 to cysteine 96. Residue asparagine 106 is glycosylated (N-linked (GlcNAc...) asparagine). The active-site Charge relay system is the serine 203. Serine 203 (nucleophile) is an active-site residue. Asparagine 294 carries N-linked (GlcNAc...) asparagine glycosylation. Cysteine 335 and cysteine 378 are oxidised to a cystine. Residues aspartate 367 and histidine 399 each act as charge relay system in the active site. N-linked (GlcNAc...) asparagine glycosylation is present at asparagine 406.

It belongs to the AB hydrolase superfamily. Lipase family. As to expression, detected in blood plasma (at protein level). Expressed in liver, brain and adrenal glands. Lower expression in testes. In laying hens, expressed higher in brain than in liver. In roosters, higher levels in liver than in brain.

Its subcellular location is the secreted. It catalyses the reaction a sterol + a 1,2-diacyl-sn-glycero-3-phosphocholine = a sterol ester + a 1-acyl-sn-glycero-3-phosphocholine. Its activity is regulated as follows. APOA1 is the most potent activator in plasma. Also activated by APOE, APOC1 and APOA4. In terms of biological role, central enzyme in the extracellular metabolism of plasma lipoproteins. Synthesized mainly in the liver and secreted into plasma where it converts cholesterol and phosphatidylcholines (lecithins) to cholesteryl esters and lysophosphatidylcholines on the surface of high and low density lipoproteins (HDLs and LDLs). The cholesterol ester is then transported back to the liver. Also produced in the brain by primary astrocytes, and esterifies free cholesterol on nascent APOE-containing lipoproteins secreted from glia and influences cerebral spinal fluid (CSF) APOE- and APOA1 levels. Together with APOE and the cholesterol transporter ABCA1, plays a key role in the maturation of glial-derived, nascent lipoproteins. Required for remodeling high-density lipoprotein particles into their spherical forms. Has a preference for plasma 16:0-18:2 or 18:O-18:2 phosphatidylcholines. The chain is Phosphatidylcholine-sterol acyltransferase (LCAT) from Gallus gallus (Chicken).